The chain runs to 933 residues: Isoleucine--tRNA ligase (933 aa).

Positions Pro-57–His-67 match the 'HIGH' region motif. Glu-556 contributes to the L-isoleucyl-5'-AMP binding site. The 'KMSKS' region motif lies at Lys-597–Ser-601. Residue Lys-600 participates in ATP binding. Zn(2+) contacts are provided by Cys-891, Cys-894, Cys-911, and Cys-914.

This sequence belongs to the class-I aminoacyl-tRNA synthetase family. IleS type 1 subfamily. Monomer. Zn(2+) is required as a cofactor.

It localises to the cytoplasm. The catalysed reaction is tRNA(Ile) + L-isoleucine + ATP = L-isoleucyl-tRNA(Ile) + AMP + diphosphate. In terms of biological role, catalyzes the attachment of isoleucine to tRNA(Ile). As IleRS can inadvertently accommodate and process structurally similar amino acids such as valine, to avoid such errors it has two additional distinct tRNA(Ile)-dependent editing activities. One activity is designated as 'pretransfer' editing and involves the hydrolysis of activated Val-AMP. The other activity is designated 'posttransfer' editing and involves deacylation of mischarged Val-tRNA(Ile). This Pediococcus pentosaceus (strain ATCC 25745 / CCUG 21536 / LMG 10740 / 183-1w) protein is Isoleucine--tRNA ligase.